The sequence spans 126 residues: Large ribosomal subunit protein bL12 (126 aa).

Belongs to the bacterial ribosomal protein bL12 family. Homodimer. Part of the ribosomal stalk of the 50S ribosomal subunit. Forms a multimeric L10(L12)X complex, where L10 forms an elongated spine to which 2 to 4 L12 dimers bind in a sequential fashion. Binds GTP-bound translation factors.

Its function is as follows. Forms part of the ribosomal stalk which helps the ribosome interact with GTP-bound translation factors. Is thus essential for accurate translation. In Solibacter usitatus (strain Ellin6076), this protein is Large ribosomal subunit protein bL12.